Here is a 115-residue protein sequence, read N- to C-terminus: Large ribosomal subunit protein bL19 (115 aa).

It belongs to the bacterial ribosomal protein bL19 family.

Its function is as follows. This protein is located at the 30S-50S ribosomal subunit interface and may play a role in the structure and function of the aminoacyl-tRNA binding site. In Alkaliphilus oremlandii (strain OhILAs) (Clostridium oremlandii (strain OhILAs)), this protein is Large ribosomal subunit protein bL19.